The sequence spans 248 residues: Small ribosomal subunit protein uS2 (248 aa).

This sequence belongs to the universal ribosomal protein uS2 family.

The chain is Small ribosomal subunit protein uS2 from Leptothrix cholodnii (strain ATCC 51168 / LMG 8142 / SP-6) (Leptothrix discophora (strain SP-6)).